The following is a 53-amino-acid chain: Small ribosomal subunit protein uS14 (53 aa).

Zn(2+) contacts are provided by C18, C21, C36, and C39.

Belongs to the universal ribosomal protein uS14 family. Zinc-binding uS14 subfamily. As to quaternary structure, part of the 30S ribosomal subunit. Zn(2+) serves as cofactor.

Its function is as follows. Binds 16S rRNA, required for the assembly of 30S particles. This Thermoplasma volcanium (strain ATCC 51530 / DSM 4299 / JCM 9571 / NBRC 15438 / GSS1) protein is Small ribosomal subunit protein uS14.